The following is a 392-amino-acid chain: PMA1 stabilization in the Golgi protein 1 (392 aa).

Positions 1–22 (MRFHDSILIFFSLASLYQHVHG) are cleaved as a signal peptide. 2 O-linked (Man) threonine glycosylation sites follow: Thr34 and Thr35. Ser36 carries an O-linked (Man) serine glycan. O-linked (Man) threonine glycosylation is present at Thr45. Ser49 carries an O-linked (Man) serine glycan. O-linked (Man) threonine glycosylation is found at Thr55, Thr57, and Thr63. O-linked (Man) serine glycosylation is present at Ser65. O-linked (Man) threonine glycosylation is present at Thr71. Ser80 is a glycosylation site (O-linked (Man) serine). O-linked (Man) threonine glycosylation is found at Thr89 and Thr99. A glycan (O-linked (Man) serine) is linked at Ser107. Thr108 and Thr112 each carry an O-linked (Man) threonine glycan. O-linked (Man) serine glycans are attached at residues Ser114 and Ser115. The O-linked (Man) threonine glycan is linked to Thr117. Ser119 and Ser148 each carry an O-linked (Man) serine glycan. A glycan (O-linked (Man) threonine) is linked at Thr156. The O-linked (Man) serine glycan is linked to Ser171. O-linked (Man) threonine glycosylation is present at Thr176. Ser181 carries an O-linked (Man) serine glycan. O-linked (Man) threonine glycosylation is found at Thr188, Thr192, Thr195, and Thr199. O-linked (Man) serine glycosylation is found at Ser203 and Ser215. Over 230–317 (DIPATFFSSE…DAGITNDQWY (88 aa)) the chain is Lumenal. The chain crosses the membrane as a helical span at residues 318-338 (YVALSIPTVVVVFFVFMYFFL). Over 339–392 (YVNGKNRDFTDVTRKALNKKRRVLGKFSEMKKFKNMKNHKYTELPSYKKTSKQN) the chain is Cytoplasmic.

Interacts with EXP1. PSG1-N' interacts with ERAD-related proteins involved in PMA1 quality control including EPS1, CDC48, UBX2 and SSM4. PSG1-C' interacts with the TLG1/2 SNARE complex proteins TLG1, TLG2 and VTI1. In terms of processing, the precursor protein is cleaved into two polypeptide chains, PSG1-N' and PSG1-C'. The cleavage is performed in the Golgi apparatus by Ca(+)-dependent serine protease KEX2 between Arg-229 and Asp-230. PSG1-N' is highly O-mannosylated.

Its subcellular location is the golgi apparatus lumen. The protein resides in the cytoplasmic vesicle. The protein localises to the COPI-coated vesicle membrane. Functionally, with EXP1, the specific cargo receptor protein for the plasma membrane ATPase PMA1, is involved in the transport and/or maturation of PMA1. EXP1 and PSG1 probably act sequentially to promote PMA1 sorting between the ER and the Golgi, with EXP1 promoting PMA1 export from the ER to the Golgi while PSG1 has a role in PMA1 maturation or quality control in the Golgi. PSG1 might also couple PMA1 sorting and maturation in the early secretory pathway with the glycosylation machinery. Its function is as follows. PSG1 is cleaved by KEX2 in two stable peptides, PSG1-N' and PSG1-C', the former supporting a role in maturation quality control, the latter having a role in modulating vesicular trafficking. In Saccharomyces cerevisiae (strain ATCC 204508 / S288c) (Baker's yeast), this protein is PMA1 stabilization in the Golgi protein 1.